We begin with the raw amino-acid sequence, 307 residues long: Cyclin-dependent kinase 5 activator 1 (307 aa).

Residue G2 is the site of N-myristoyl glycine attachment. S8 is subject to Phosphoserine; by CDK5. The tract at residues 97-136 (TFAQPPPAQPPAPPASQLSGSQTGGSSSVKKAPHPAVTSA) is disordered. The segment covering 100 to 110 (QPPPAQPPAPP) has biased composition (pro residues). Over residues 111 to 124 (ASQLSGSQTGGSSS) the composition is skewed to low complexity. At T138 the chain carries Phosphothreonine; by CDK5.

It belongs to the cyclin-dependent kinase 5 activator family. In terms of assembly, heterodimer composed of a catalytic subunit CDK5 and a regulatory subunit CDK5R1 (p25) and macromolecular complex composed of at least CDK5, CDK5R1 (p35) and CDK5RAP1 or CDK5RAP2 or CDK5RAP3. Only the heterodimer shows kinase activity. Interacts with EPHA4 and NGEF; may mediate the activation of NGEF by EPHA4. Interacts with RASGRF2. The complex p35/CDK5 interacts with CLOCK. In terms of processing, the p35 form is proteolytically cleaved by calpain, giving rise to the p25 form. P35 has a 5 to 10 fold shorter half-life compared to p25. The conversion results in deregulation of the CDK5 kinase: p25/CDK5 kinase displays an increased and altered tau phosphorylation in comparison to the p35/CDK5 kinase in vivo. Myristoylated. A proper myristoylation signal is essential for the proper distribution of p35. Post-translationally, ubiquitinated, leading to its degradation: degradation of p35 by proteasome results in down-regulation of CDK5 activity. During this process, CDK5 phosphorylates p35 and induces its ubiquitination and subsequent degradation. Ubiquitinated by the CRL2(FEM1B) complex, which recognizes the -Gly-Leu-Asp-Arg C-degron at the C-terminus, leading to its degradation. In terms of processing, phosphorylation at Ser-8 and Thr-138 by CDK5 prevents calpain-mediated proteolysis. In terms of tissue distribution, brain and neuron specific.

Its subcellular location is the cell membrane. The protein resides in the cell projection. It is found in the neuron projection. The protein localises to the nucleus. It localises to the cytoplasm. Its subcellular location is the perinuclear region. The protein resides in the perikaryon. Functionally, p35 is a neuron specific activator of CDK5. The complex p35/CDK5 is required for neurite outgrowth and cortical lamination. Involved in dendritic spine morphogenesis by mediating the EFNA1-EPHA4 signaling. Activator of TPKII. The complex p35/CDK5 participates in the regulation of the circadian clock by modulating the function of CLOCK protein: phosphorylates CLOCK at 'Thr-451' and 'Thr-461' and regulates the transcriptional activity of the CLOCK-BMAL1 heterodimer in association with altered stability and subcellular distribution. This chain is Cyclin-dependent kinase 5 activator 1 (CDK5R1), found in Homo sapiens (Human).